The sequence spans 175 residues: Protein OPG036 (175 aa).

This sequence belongs to the poxviridae OPG036 family.

Its subcellular location is the host nucleus. In terms of biological role, plays a role in the inhibition of host innate immune response. Within the host nucleus, inhibits activation of interferon-beta promoter by inhibiting IRF3 activation. This Bos taurus (Bovine) protein is Protein OPG036 (OPG036).